The following is a 259-amino-acid chain: Aminoglycoside 3'-phosphotransferase (259 aa).

D187 acts as the Proton acceptor in catalysis.

The protein belongs to the aminoglycoside phosphotransferase family.

The catalysed reaction is kanamycin A + ATP = kanamycin 3'-phosphate + ADP + H(+). Functionally, resistance to kanamycin and structurally-related aminoglycosides, including amikacin. The polypeptide is Aminoglycoside 3'-phosphotransferase (aphA-6) (Acinetobacter baumannii).